Consider the following 119-residue polypeptide: Large ribosomal subunit protein bL12 (119 aa).

It belongs to the bacterial ribosomal protein bL12 family. Homodimer. Part of the ribosomal stalk of the 50S ribosomal subunit. Forms a multimeric L10(L12)X complex, where L10 forms an elongated spine to which 2 to 4 L12 dimers bind in a sequential fashion. Binds GTP-bound translation factors.

Its function is as follows. Forms part of the ribosomal stalk which helps the ribosome interact with GTP-bound translation factors. Is thus essential for accurate translation. In Lysinibacillus sphaericus (strain C3-41), this protein is Large ribosomal subunit protein bL12.